The sequence spans 1407 residues: DNA-directed RNA polymerase subunit beta' (1407 aa).

Positions 70, 72, 85, and 88 each coordinate Zn(2+). Asp460, Asp462, and Asp464 together coordinate Mg(2+). Cys814, Cys888, Cys895, and Cys898 together coordinate Zn(2+).

The protein belongs to the RNA polymerase beta' chain family. In terms of assembly, the RNAP catalytic core consists of 2 alpha, 1 beta, 1 beta' and 1 omega subunit. When a sigma factor is associated with the core the holoenzyme is formed, which can initiate transcription. Requires Mg(2+) as cofactor. The cofactor is Zn(2+).

The enzyme catalyses RNA(n) + a ribonucleoside 5'-triphosphate = RNA(n+1) + diphosphate. In terms of biological role, DNA-dependent RNA polymerase catalyzes the transcription of DNA into RNA using the four ribonucleoside triphosphates as substrates. In Salmonella paratyphi B (strain ATCC BAA-1250 / SPB7), this protein is DNA-directed RNA polymerase subunit beta'.